The primary structure comprises 292 residues: D-alanyl-D-alanine endopeptidase (292 aa).

The N-terminal stretch at 1-18 is a signal peptide; that stretch reads MFKKALFILSLCPSFALA. The active-site Acyl-ester intermediate is the S45. Catalysis depends on K48, which acts as the Proton acceptor. The active site involves S102. K207 contacts substrate.

This sequence belongs to the peptidase S11 family.

It localises to the periplasm. Its function is as follows. Cell wall formation. May play a specialized role in remodeling the cell wall. Specifically hydrolyzes the DD-diaminopimelate-alanine bonds in high-molecular-mass murein sacculi. In Haemophilus influenzae (strain ATCC 51907 / DSM 11121 / KW20 / Rd), this protein is D-alanyl-D-alanine endopeptidase (pbpG).